The following is a 591-amino-acid chain: Aspartate--tRNA ligase (591 aa).

Glu-173 contributes to the L-aspartate binding site. The segment at 197–200 (QLFK) is aspartate. Residue Arg-219 participates in L-aspartate binding. Residues 219-221 (RDE) and Gln-228 contribute to the ATP site. His-448 contributes to the L-aspartate binding site. Glu-482 lines the ATP pocket. L-aspartate is bound at residue Arg-489. 534 to 537 (GLDR) is a binding site for ATP.

It belongs to the class-II aminoacyl-tRNA synthetase family. Type 1 subfamily. In terms of assembly, homodimer.

The protein localises to the cytoplasm. The enzyme catalyses tRNA(Asp) + L-aspartate + ATP = L-aspartyl-tRNA(Asp) + AMP + diphosphate. Its function is as follows. Catalyzes the attachment of L-aspartate to tRNA(Asp) in a two-step reaction: L-aspartate is first activated by ATP to form Asp-AMP and then transferred to the acceptor end of tRNA(Asp). This Shewanella frigidimarina (strain NCIMB 400) protein is Aspartate--tRNA ligase.